Here is a 177-residue protein sequence, read N- to C-terminus: ATP synthase subunit delta (177 aa).

The protein belongs to the ATPase delta chain family. F-type ATPases have 2 components, F(1) - the catalytic core - and F(0) - the membrane proton channel. F(1) has five subunits: alpha(3), beta(3), gamma(1), delta(1), epsilon(1). F(0) has three main subunits: a(1), b(2) and c(10-14). The alpha and beta chains form an alternating ring which encloses part of the gamma chain. F(1) is attached to F(0) by a central stalk formed by the gamma and epsilon chains, while a peripheral stalk is formed by the delta and b chains.

It is found in the cell inner membrane. Its function is as follows. F(1)F(0) ATP synthase produces ATP from ADP in the presence of a proton or sodium gradient. F-type ATPases consist of two structural domains, F(1) containing the extramembraneous catalytic core and F(0) containing the membrane proton channel, linked together by a central stalk and a peripheral stalk. During catalysis, ATP synthesis in the catalytic domain of F(1) is coupled via a rotary mechanism of the central stalk subunits to proton translocation. In terms of biological role, this protein is part of the stalk that links CF(0) to CF(1). It either transmits conformational changes from CF(0) to CF(1) or is implicated in proton conduction. The polypeptide is ATP synthase subunit delta (Proteus mirabilis (strain HI4320)).